The sequence spans 472 residues: UDP-N-acetylmuramate--L-alanine ligase (472 aa).

ATP is bound at residue 121-127 (GTHGKTT).

The protein belongs to the MurCDEF family.

Its subcellular location is the cytoplasm. It catalyses the reaction UDP-N-acetyl-alpha-D-muramate + L-alanine + ATP = UDP-N-acetyl-alpha-D-muramoyl-L-alanine + ADP + phosphate + H(+). Its pathway is cell wall biogenesis; peptidoglycan biosynthesis. Cell wall formation. The chain is UDP-N-acetylmuramate--L-alanine ligase from Hahella chejuensis (strain KCTC 2396).